Consider the following 407-residue polypeptide: Arginine biosynthesis bifunctional protein ArgJ (407 aa).

Substrate contacts are provided by Thr-157, Lys-183, Thr-194, Glu-280, Asn-402, and Thr-407. Thr-194 (nucleophile) is an active-site residue.

The protein belongs to the ArgJ family. In terms of assembly, heterotetramer of two alpha and two beta chains.

It localises to the cytoplasm. It carries out the reaction N(2)-acetyl-L-ornithine + L-glutamate = N-acetyl-L-glutamate + L-ornithine. The catalysed reaction is L-glutamate + acetyl-CoA = N-acetyl-L-glutamate + CoA + H(+). It participates in amino-acid biosynthesis; L-arginine biosynthesis; L-ornithine and N-acetyl-L-glutamate from L-glutamate and N(2)-acetyl-L-ornithine (cyclic): step 1/1. Its pathway is amino-acid biosynthesis; L-arginine biosynthesis; N(2)-acetyl-L-ornithine from L-glutamate: step 1/4. Catalyzes two activities which are involved in the cyclic version of arginine biosynthesis: the synthesis of N-acetylglutamate from glutamate and acetyl-CoA as the acetyl donor, and of ornithine by transacetylation between N(2)-acetylornithine and glutamate. This chain is Arginine biosynthesis bifunctional protein ArgJ, found in Bacillus cereus (strain ATCC 10987 / NRS 248).